Reading from the N-terminus, the 168-residue chain is Cell division inhibitor SulA (168 aa).

The segment at 106-112 is ftsZ binding; that stretch reads ALQTGNY. Positions 161 to 168 are lon protease binding; it reads KIHSSLYH.

It belongs to the SulA family. As to quaternary structure, interacts with FtsZ. In terms of processing, is rapidly cleaved and degraded by the Lon protease once DNA damage is repaired.

In terms of biological role, component of the SOS system and an inhibitor of cell division. Accumulation of SulA causes rapid cessation of cell division and the appearance of long, non-septate filaments. In the presence of GTP, binds a polymerization-competent form of FtsZ in a 1:1 ratio, thus inhibiting FtsZ polymerization and therefore preventing it from participating in the assembly of the Z ring. This mechanism prevents the premature segregation of damaged DNA to daughter cells during cell division. This is Cell division inhibitor SulA from Serratia marcescens.